The following is a 736-amino-acid chain: Krev interaction trapped protein 1 (736 aa).

The tract at residues 1 to 170 (MGNPENIEDA…DKWLDERHAQ (170 aa)) is N-terminal domain similar to Nudix hydrolase domain. Positions 172–195 (HFIPALFRPSPLERIKTNVINPAY) are interaction with ITGB1BP1. ANK repeat units follow at residues 287 to 316 (VDDF…SVNQ), 320 to 350 (DHWA…NPNL), 354 to 384 (QLSS…DRHI), and 388 to 419 (QGRS…NKPY). One can recognise an FERM domain in the interval 420 to 736 (EKVRIYRMDG…GQLMPSERNS (317 aa)). Positions 430 to 452 (SYRSVELKHGNNTTAQQIMEGMR) are interaction with RAP1B.

Found in a complex, at least composed of ITGB1BP1, KRIT1 and RAP1A. Interacts (via C-terminus FERM domain) with RAP1A (active GTP-bound form preferentially); the interaction does not induce the opening conformation of KRIT1. Interacts (via N-terminus NPXY motif) with ITGB1BP1; the interaction induces the opening conformation of KRIT1 and competes with ITGB1 for ITGB1BP1 interaction. Associates (via N-terminus and C-terminus regions) with microtubules; the interaction is inhibited in presence of ITGB1BP1 and active GTP-bound RAP1A. Interacts (via FERM domain) with RAP1B. Interacts with CDH5. Interacts with RAP1A. Interacts with HEG1 and CCM2; greatly facilitates CCM2-binding to HEG1. As to expression, expressed in heart, brain, spleen, lung, thymus, kidney and testis. Isoform 2 was more frequently expressed in the thymus than isoform 1.

Its subcellular location is the cytoplasm. It is found in the cytoskeleton. It localises to the cell membrane. The protein resides in the cell junction. Functionally, component of the CCM signaling pathway which is a crucial regulator of heart and vessel formation and integrity. Negative regulator of angiogenesis. Inhibits endothelial proliferation, apoptosis, migration, lumen formation and sprouting angiogenesis in primary endothelial cells. Promotes AKT phosphorylation in a NOTCH-dependent and independent manner, and inhibits ERK1/2 phosphorylation indirectly through activation of the DELTA-NOTCH cascade. Acts in concert with CDH5 to establish and maintain correct endothelial cell polarity and vascular lumen and these effects are mediated by recruitment and activation of the Par polarity complex and RAP1B. Required for the localization of phosphorylated PRKCZ, PARD3, TIAM1 and RAP1B to the cell junction, and cell junction stabilization. Plays a role in integrin signaling via its interaction with ITGB1BP1; this prevents the interaction between ITGB1 and ITGB1BP1. Microtubule-associated protein that binds to phosphatidylinositol 4,5-bisphosphate (PIP2)-containing membranes in a GTP-bound RAP1-dependent manner. Plays an important role in the maintenance of the intracellular reactive oxygen species (ROS) homeostasis to prevent oxidative cellular damage. Regulates the homeostasis of intracellular ROS through an antioxidant pathway involving FOXO1 and SOD2. Facilitates the down-regulation of cyclin-D1 (CCND1) levels required for cell transition from proliferative growth to quiescence by preventing the accumulation of intracellular ROS through the modulation of FOXO1 and SOD2 levels. May play a role in the regulation of macroautophagy through the down-regulation of the mTOR pathway. This Mus musculus (Mouse) protein is Krev interaction trapped protein 1 (Krit1).